A 1125-amino-acid polypeptide reads, in one-letter code: Exportin-6 (1125 aa).

At A2 the chain carries N-acetylalanine. Residues 31–97 (IEELLNNFAQ…RSCLPKLLLA (67 aa)) form the Importin N-terminal domain. Phosphoserine is present on S199. Residues T201 and T204 each carry the phosphothreonine modification. A phosphoserine mark is found at S208 and S224.

The protein belongs to the exportin family. In terms of assembly, found in a complex with XPO6, Ran, ACTB and PFN1. Interacts with ACTB. Interacts with ACTB in a RanGTP-dependent manner.

It localises to the nucleus. Its subcellular location is the cytoplasm. Its function is as follows. Mediates the nuclear export of actin and profilin-actin complexes in somatic cells. The protein is Exportin-6 (Xpo6) of Mus musculus (Mouse).